We begin with the raw amino-acid sequence, 181 residues long: 3-hexulose-6-phosphate isomerase (181 aa).

One can recognise an SIS domain in the interval 27–168 (ILSLVDAAGR…IAKLVDQKGL (142 aa)). Substrate-binding positions include Ser-45 and 84 to 89 (SGSGST). Glu-148 (proton acceptor) is an active-site residue.

The protein belongs to the SIS family. PHI subfamily. Homodimer.

The catalysed reaction is D-arabino-hex-3-ulose 6-phosphate = beta-D-fructose 6-phosphate. Its pathway is one-carbon metabolism; formaldehyde assimilation via RuMP pathway; D-fructose 6-phosphate from D-ribulose 5-phosphate and formaldehyde: step 2/2. Catalyzes the isomerization between 3-hexulose 6-phosphate and fructose 6-phosphate. The polypeptide is 3-hexulose-6-phosphate isomerase (rmpB) (Methylomonas aminofaciens).